The chain runs to 253 residues: MNSFLGLLKKDIKLSRMWLLVWICGIIFLLGTGHIIASRTKEPLVIFGFFVAVAFFLLFLSPVFVFYHLRKEGKSQLWLYNPNGGLWLFSSKLAASLLYQFVIQLALTAYGIWMYHMLSVKNLLEHQVDITSTVALLNMYGLISSLDMSVTVIVFWTVFHSLRNWRGMRWAAMVLLVAMWLFFDEYIISPLVESQKHFWPVTVYCNFDFHFHNVWRLELKPIHLSVLGFPIAIVITFLLLIMASKLLDRKVEV.

6 helical membrane-spanning segments follow: residues Met-17 to Ala-37, Ile-46 to Phe-66, Leu-93 to Trp-113, Met-139 to Phe-159, Ala-172 to Val-192, and Ile-222 to Met-242.

Its subcellular location is the cell membrane. This is an uncharacterized protein from Bacillus subtilis (strain 168).